The sequence spans 571 residues: RNA polymerase sigma factor SigA (571 aa).

The sigma-70 factor domain-2 stretch occupies residues 321–391 (MVESNLRLVI…TRAIADQART (71 aa)). The Interaction with polymerase core subunit RpoC signature appears at 345-348 (DLIQ). Residues 400 to 476 (ETINKVLRGA…DTAVESPAEA (77 aa)) are sigma-70 factor domain-3. The segment at 489–542 (VLKTLTDRERFVLIHRFGLLDGRPKTLEEVGSAFNVTRERIRQIEAKALRKMRH) is sigma-70 factor domain-4. A DNA-binding region (H-T-H motif) is located at residues 515-534 (LEEVGSAFNVTRERIRQIEA).

Belongs to the sigma-70 factor family. RpoD/SigA subfamily. As to quaternary structure, interacts transiently with the RNA polymerase catalytic core.

The protein resides in the cytoplasm. In terms of biological role, sigma factors are initiation factors that promote the attachment of RNA polymerase to specific initiation sites and are then released. This sigma factor is the primary sigma factor during exponential growth. The chain is RNA polymerase sigma factor SigA from Chlamydia trachomatis serovar D (strain ATCC VR-885 / DSM 19411 / UW-3/Cx).